Reading from the N-terminus, the 153-residue chain is 6,7-dimethyl-8-ribityllumazine synthase (153 aa).

5-amino-6-(D-ribitylamino)uracil is bound by residues phenylalanine 22, 56–58 (AFE), and 80–82 (AVI). 85 to 86 (GT) provides a ligand contact to (2S)-2-hydroxy-3-oxobutyl phosphate. Histidine 88 acts as the Proton donor in catalysis. Phenylalanine 113 lines the 5-amino-6-(D-ribitylamino)uracil pocket. Arginine 127 is a binding site for (2S)-2-hydroxy-3-oxobutyl phosphate.

The protein belongs to the DMRL synthase family. Forms an icosahedral capsid composed of 60 subunits, arranged as a dodecamer of pentamers.

The enzyme catalyses (2S)-2-hydroxy-3-oxobutyl phosphate + 5-amino-6-(D-ribitylamino)uracil = 6,7-dimethyl-8-(1-D-ribityl)lumazine + phosphate + 2 H2O + H(+). It functions in the pathway cofactor biosynthesis; riboflavin biosynthesis; riboflavin from 2-hydroxy-3-oxobutyl phosphate and 5-amino-6-(D-ribitylamino)uracil: step 1/2. In terms of biological role, catalyzes the formation of 6,7-dimethyl-8-ribityllumazine by condensation of 5-amino-6-(D-ribitylamino)uracil with 3,4-dihydroxy-2-butanone 4-phosphate. This is the penultimate step in the biosynthesis of riboflavin. The polypeptide is 6,7-dimethyl-8-ribityllumazine synthase (Hydrogenovibrio crunogenus (strain DSM 25203 / XCL-2) (Thiomicrospira crunogena)).